Here is a 150-residue protein sequence, read N- to C-terminus: MPIVDSGSVSPLTAADKTKILAAWDLVYKNYEKNSVDILVKFFTGTPAAQAFFPKFKGLTTADDLKKSSDVRWHAERIINAVNDAVKSMDDTEKMSMKLKELSNKHVKNFNVDRKYFKVLAGVIADTVAPGDASFEKLMSIICILLNSAY.

The 140-residue stretch at 11–150 (PLTAADKTKI…IICILLNSAY (140 aa)) folds into the Globin domain. Positions 74 and 106 each coordinate heme b.

The protein belongs to the globin family. As to quaternary structure, monomer.

The protein is Globin-3 of Mordacia mordax (Southern hemisphere lamprey).